We begin with the raw amino-acid sequence, 272 residues long: NH(3)-dependent NAD(+) synthetase (272 aa).

Residue 45 to 52 (GISGGQDS) coordinates ATP. Asp51 contributes to the Mg(2+) binding site. Arg138 is a deamido-NAD(+) binding site. Residue Thr158 participates in ATP binding. Mg(2+) is bound at residue Glu163. Residues Lys171 and Asp178 each coordinate deamido-NAD(+). The ATP site is built by Lys187 and Thr209. 258 to 259 (HK) lines the deamido-NAD(+) pocket.

It belongs to the NAD synthetase family. As to quaternary structure, homodimer.

It catalyses the reaction deamido-NAD(+) + NH4(+) + ATP = AMP + diphosphate + NAD(+) + H(+). The protein operates within cofactor biosynthesis; NAD(+) biosynthesis; NAD(+) from deamido-NAD(+) (ammonia route): step 1/1. In terms of biological role, catalyzes the ATP-dependent amidation of deamido-NAD to form NAD. Uses ammonia as a nitrogen source. The sequence is that of NH(3)-dependent NAD(+) synthetase from Bacillus velezensis (strain DSM 23117 / BGSC 10A6 / LMG 26770 / FZB42) (Bacillus amyloliquefaciens subsp. plantarum).